The chain runs to 205 residues: Imidazole glycerol phosphate synthase subunit HisH (205 aa).

The Glutamine amidotransferase type-1 domain maps to methionine 1 to glycine 205. Cysteine 79 acts as the Nucleophile in catalysis. Catalysis depends on residues histidine 186 and glutamate 188.

Heterodimer of HisH and HisF.

It is found in the cytoplasm. The catalysed reaction is 5-[(5-phospho-1-deoxy-D-ribulos-1-ylimino)methylamino]-1-(5-phospho-beta-D-ribosyl)imidazole-4-carboxamide + L-glutamine = D-erythro-1-(imidazol-4-yl)glycerol 3-phosphate + 5-amino-1-(5-phospho-beta-D-ribosyl)imidazole-4-carboxamide + L-glutamate + H(+). It catalyses the reaction L-glutamine + H2O = L-glutamate + NH4(+). The protein operates within amino-acid biosynthesis; L-histidine biosynthesis; L-histidine from 5-phospho-alpha-D-ribose 1-diphosphate: step 5/9. Functionally, IGPS catalyzes the conversion of PRFAR and glutamine to IGP, AICAR and glutamate. The HisH subunit catalyzes the hydrolysis of glutamine to glutamate and ammonia as part of the synthesis of IGP and AICAR. The resulting ammonia molecule is channeled to the active site of HisF. This Wolinella succinogenes (strain ATCC 29543 / DSM 1740 / CCUG 13145 / JCM 31913 / LMG 7466 / NCTC 11488 / FDC 602W) (Vibrio succinogenes) protein is Imidazole glycerol phosphate synthase subunit HisH.